The chain runs to 384 residues: Substance-K receptor (384 aa).

The Extracellular segment spans residues 1–32; it reads MGGRAIVTDTNIFSGLESNTTGVTAFSMPAWQ. A glycan (N-linked (GlcNAc...) asparagine) is linked at Asn-19. Residues 33–56 form a helical membrane-spanning segment; sequence LALWATAYLGLVLVAVTGNATVIW. Residues 57–69 are Cytoplasmic-facing; that stretch reads IILAHERMRTVTN. A helical membrane pass occupies residues 70–90; it reads YFIINLALADLCMAAFNATFN. The Extracellular segment spans residues 91 to 107; sequence FVYASHNIWYFGRAFCY. An intrachain disulfide couples Cys-106 to Cys-181. The chain crosses the membrane as a helical span at residues 108 to 129; the sequence is FQNLFPITAMFVSIYSMTAIAA. The Cytoplasmic portion of the chain corresponds to 130-149; it reads DRYMAIVHPFQPRLSAPITK. A helical transmembrane segment spans residues 150–170; it reads ATIAGIWLVALALASPQCFYS. The Extracellular portion of the chain corresponds to 171-196; it reads TITVDQGATKCVVAWPNDNGGKMLLL. The helical transmembrane segment at 197–218 threads the bilayer; the sequence is YHLVVFVLVYFLPLVVMFVAYS. Residues 219 to 251 lie on the Cytoplasmic side of the membrane; it reads VIGLTLWKRAVPRHQAHGANLRHLHAKKKFVKA. A helical membrane pass occupies residues 252–272; that stretch reads MVLVVLTFAICWLPYHLYFIL. Residues 273–290 lie on the Extracellular side of the membrane; the sequence is GSFQKDIYYRKFIQQVYL. A helical transmembrane segment spans residues 291 to 310; that stretch reads ALFWLAMSSTMYNPIIYCCL. Residues 311–384 are Cytoplasmic-facing; that stretch reads NHRFRSGFRL…SPQDVEPAAP (74 aa). Residue Cys-324 is the site of S-palmitoyl cysteine attachment.

Belongs to the G-protein coupled receptor 1 family.

It is found in the cell membrane. This is a receptor for the tachykinin neuropeptide substance K (neurokinin A). It is associated with G proteins that activate a phosphatidylinositol-calcium second messenger system. The rank order of affinity of this receptor to tachykinins is: substance K &gt; neuromedin-K &gt; substance P. The sequence is that of Substance-K receptor (TACR2) from Mesocricetus auratus (Golden hamster).